Here is a 750-residue protein sequence, read N- to C-terminus: Photosystem I P700 chlorophyll a apoprotein A1 (750 aa).

Transmembrane regions (helical) follow at residues 70 to 93 (VFSAHFGQLSIIFLWLSGMYFHGA), 156 to 179 (LYCTAIGALVFAALMLFAGWFHYH), 195 to 219 (LNHHLAGLLGLGSLSWAGHQVHVSL), 291 to 309 (IAHHHLAIAILFLVAGHMY), 346 to 369 (WHAQLSLNLAMLGSSTIVVAHHMY), 385 to 411 (LSLFTHHMWIGGFLIVGAAAHAAIFMV), 433 to 455 (AIISHLNWACIFLGFHSFGLYIH), and 531 to 549 (FLVHHIHAFTIHVTVLILL). [4Fe-4S] cluster is bound by residues Cys-573 and Cys-582. 2 helical membrane-spanning segments follow: residues 589–610 (HVFLGLFWMYNAISVVIFHFSW) and 664–686 (LSAYGLFFLGAHFVWAFSLMFLF). A chlorophyll a'-binding site is contributed by His-675. The chlorophyll a site is built by Met-683 and Tyr-691. Trp-692 contacts phylloquinone. A helical membrane pass occupies residues 724–744 (AVGVTHYLLGGIATTWAFFLA).

Belongs to the PsaA/PsaB family. In terms of assembly, the PsaA/B heterodimer binds the P700 chlorophyll special pair and subsequent electron acceptors. PSI consists of a core antenna complex that captures photons, and an electron transfer chain that converts photonic excitation into a charge separation. The eukaryotic PSI reaction center is composed of at least 11 subunits. P700 is a chlorophyll a/chlorophyll a' dimer, A0 is one or more chlorophyll a, A1 is one or both phylloquinones and FX is a shared 4Fe-4S iron-sulfur center. is required as a cofactor.

The protein resides in the plastid. The protein localises to the chloroplast thylakoid membrane. It catalyses the reaction reduced [plastocyanin] + hnu + oxidized [2Fe-2S]-[ferredoxin] = oxidized [plastocyanin] + reduced [2Fe-2S]-[ferredoxin]. PsaA and PsaB bind P700, the primary electron donor of photosystem I (PSI), as well as the electron acceptors A0, A1 and FX. PSI is a plastocyanin-ferredoxin oxidoreductase, converting photonic excitation into a charge separation, which transfers an electron from the donor P700 chlorophyll pair to the spectroscopically characterized acceptors A0, A1, FX, FA and FB in turn. Oxidized P700 is reduced on the lumenal side of the thylakoid membrane by plastocyanin. The protein is Photosystem I P700 chlorophyll a apoprotein A1 of Calycanthus floridus var. glaucus (Eastern sweetshrub).